The sequence spans 117 residues: G antigen 12I (117 aa).

Positions 1–117 (MSWRGRSTYY…PEEGEKQSQC (117 aa)) are disordered. Acidic residues-rich tracts occupy residues 32 to 45 (FSDEVEPATPEEGE) and 87 to 96 (ECEDGPDGQE). The segment covering 103–117 (EEVKTPEEGEKQSQC) has biased composition (basic and acidic residues).

The protein belongs to the GAGE family. Forms tetramers.

The chain is G antigen 12I (GAGE12I) from Homo sapiens (Human).